Here is a 584-residue protein sequence, read N- to C-terminus: Isopropyl malate synthase htyA (584 aa).

The Pyruvate carboxyltransferase domain maps to 39 to 317 (PIWLSTDLRD…ETGLDFSNLP (279 aa)).

The protein belongs to the alpha-IPM synthase/homocitrate synthase family. LeuA type 2 subfamily.

The catalysed reaction is 3-methyl-2-oxobutanoate + acetyl-CoA + H2O = (2S)-2-isopropylmalate + CoA + H(+). The protein operates within antifungal biosynthesis. In terms of biological role, isopropyl malate synthase; part of the gene cluster that mediates the de novo generation of L-homotyrosine from acetyl-CoA and 4-hydroxyphenyl-pyruvate. L-homotyrosine is a building block of echinocandin B, a fungal lipidated cyclic hexapeptide that acts as an antifungal agent. L-homotyrosine 4-hydroxyphenyl-pyruvate first undergoes an aldol-type condensation by htyA with the C-2 of acetyl-CoA followed by the release of CoA to form 2-(4-hydroxybenzyl)-malate. This is followed by isomerization of 2-(4-hydroxy-benzyl)-malate to 3-(4-hydroxybenzyl)-malate by htyD. Thereafter, 3-(4-hydroxybenzyl)-malate undergoes decarboxylation and oxidation to form 2-oxo-4-(4-hydroxybenzyl)butanoic acid, coupled to reduction of NAD(+) to NADH by htyC. The product then undergoes transamination catalyzed by htyB to form L-homotyrosine. This is Isopropyl malate synthase htyA from Aspergillus rugulosus (Emericella rugulosa).